A 376-amino-acid chain; its full sequence is Heme chaperone HemW (376 aa).

The region spanning 1 to 236 (MFKLPPISLY…LKQSGYKKYE (236 aa)) is the Radical SAM core domain. An S-adenosyl-L-methionine-binding site is contributed by Tyr-10. 3 residues coordinate [4Fe-4S] cluster: Cys-16, Cys-20, and Cys-23. Residues Gly-66, 67-68 (GT), Glu-99, Gln-126, Arg-138, and Asp-162 contribute to the S-adenosyl-L-methionine site.

This sequence belongs to the anaerobic coproporphyrinogen-III oxidase family. HemW subfamily. [4Fe-4S] cluster serves as cofactor.

The protein localises to the cytoplasm. Probably acts as a heme chaperone, transferring heme to an unknown acceptor. Binds one molecule of heme per monomer, possibly covalently. Binds 1 [4Fe-4S] cluster. The cluster is coordinated with 3 cysteines and an exchangeable S-adenosyl-L-methionine. In Buchnera aphidicola subsp. Schizaphis graminum (strain Sg), this protein is Heme chaperone HemW.